The primary structure comprises 83 residues: Cytochrome b559 subunit alpha (83 aa).

A helical transmembrane segment spans residues 21–35 (VIHSITIPSLFIAGW). Residue His23 coordinates heme.

This sequence belongs to the PsbE/PsbF family. In terms of assembly, heterodimer of an alpha subunit and a beta subunit. PSII is composed of 1 copy each of membrane proteins PsbA, PsbB, PsbC, PsbD, PsbE, PsbF, PsbH, PsbI, PsbJ, PsbK, PsbL, PsbM, PsbT, PsbX, PsbY, PsbZ, Psb30/Ycf12, at least 3 peripheral proteins of the oxygen-evolving complex and a large number of cofactors. It forms dimeric complexes. Heme b serves as cofactor.

Its subcellular location is the plastid. It is found in the chloroplast thylakoid membrane. In terms of biological role, this b-type cytochrome is tightly associated with the reaction center of photosystem II (PSII). PSII is a light-driven water:plastoquinone oxidoreductase that uses light energy to abstract electrons from H(2)O, generating O(2) and a proton gradient subsequently used for ATP formation. It consists of a core antenna complex that captures photons, and an electron transfer chain that converts photonic excitation into a charge separation. The sequence is that of Cytochrome b559 subunit alpha from Piper cenocladum (Ant piper).